A 426-amino-acid polypeptide reads, in one-letter code: Transcription factor bHLH60 (426 aa).

Polar residues-rich tracts occupy residues 117–137 (QNGN…SSAN) and 148–172 (TDSS…QNNR). The interval 117–201 (QNGNISGETP…SSEENEKLPY (85 aa)) is disordered. Positions 191 to 200 (KSSEENEKLP) are enriched in basic and acidic residues. The 98-residue stretch at 210–307 (QATDSHSLAE…DEIINHVQSL (98 aa)) folds into the bHLH domain. Positions 367 to 398 (HRQLQQPPTQQWPFDGLNQPVWGREEDQAHGN) are disordered.

Homodimer. As to expression, expressed constitutively in roots, leaves, stems, and flowers.

The protein resides in the nucleus. In Arabidopsis thaliana (Mouse-ear cress), this protein is Transcription factor bHLH60 (BHLH60).